The primary structure comprises 330 residues: MGPLWLDVAGYELSAEDREILQHPTVGGVILFGRNYHDNQQLLALNKAIRQAAKRPILIGVDQEGGRVQRFREGFSRIPPAQYYARAENGVELAEQGGWLMAAELIAHDVDLSFAPVLDMGFACKAIGNRAFGEDVQTVLKHSSAFLRGMKAVGMATTGKHFPGHGAVIADSHLETPYDERETIAQDMAIFRAQIEAGVLDAMMPAHVVYPHYDAQPASGSSYWLKQVLREELGFKGIVFSDDLSMEGAAVMGGPVERSHQALVAGCDMILICNKREAAVEVLDNLPIMEVPQAEALLKKQQFSYSELKRLERWQQASANMQRLIEQFSE.

Substrate-binding positions include D62, R70, R130, and 160 to 161 (KH). The active-site Proton donor/acceptor is H173. Residue D242 is the Nucleophile of the active site.

The protein belongs to the glycosyl hydrolase 3 family. NagZ subfamily. In terms of assembly, monomer.

Its subcellular location is the cytoplasm. It catalyses the reaction Hydrolysis of terminal non-reducing N-acetyl-D-hexosamine residues in N-acetyl-beta-D-hexosaminides.. Its pathway is cell wall biogenesis; peptidoglycan recycling. Plays a role in peptidoglycan recycling by cleaving the terminal beta-1,4-linked N-acetylglucosamine (GlcNAc) from peptide-linked peptidoglycan fragments, giving rise to free GlcNAc, anhydro-N-acetylmuramic acid and anhydro-N-acetylmuramic acid-linked peptides. Plays a role in beta-lactam antibiotic resistance via its role in generating anhydro-N-acetylmuramic acid-linked peptides; these peptides function as signaling molecules that induce high-level expression of the beta-lactamase AmpC. The sequence is that of Beta-hexosaminidase from Vibrio cholerae serotype O1 (strain ATCC 39315 / El Tor Inaba N16961).